The sequence spans 166 residues: NAD(P)H-quinone oxidoreductase subunit I, chloroplastic (166 aa).

4Fe-4S ferredoxin-type domains lie at 55–84 and 95–124; these read GRIH…VDWK and LNYS…MTEE. Residues C64, C67, C70, C74, C104, C107, C110, and C114 each coordinate [4Fe-4S] cluster.

This sequence belongs to the complex I 23 kDa subunit family. In terms of assembly, NDH is composed of at least 16 different subunits, 5 of which are encoded in the nucleus. The cofactor is [4Fe-4S] cluster.

The protein resides in the plastid. Its subcellular location is the chloroplast thylakoid membrane. It carries out the reaction a plastoquinone + NADH + (n+1) H(+)(in) = a plastoquinol + NAD(+) + n H(+)(out). The catalysed reaction is a plastoquinone + NADPH + (n+1) H(+)(in) = a plastoquinol + NADP(+) + n H(+)(out). Its function is as follows. NDH shuttles electrons from NAD(P)H:plastoquinone, via FMN and iron-sulfur (Fe-S) centers, to quinones in the photosynthetic chain and possibly in a chloroplast respiratory chain. The immediate electron acceptor for the enzyme in this species is believed to be plastoquinone. Couples the redox reaction to proton translocation, and thus conserves the redox energy in a proton gradient. This is NAD(P)H-quinone oxidoreductase subunit I, chloroplastic from Marshallia caespitosa (Barbara's buttons).